The primary structure comprises 427 residues: Gamma-glutamyl phosphate reductase (427 aa).

Belongs to the gamma-glutamyl phosphate reductase family.

It localises to the cytoplasm. The catalysed reaction is L-glutamate 5-semialdehyde + phosphate + NADP(+) = L-glutamyl 5-phosphate + NADPH + H(+). It participates in amino-acid biosynthesis; L-proline biosynthesis; L-glutamate 5-semialdehyde from L-glutamate: step 2/2. In terms of biological role, catalyzes the NADPH-dependent reduction of L-glutamate 5-phosphate into L-glutamate 5-semialdehyde and phosphate. The product spontaneously undergoes cyclization to form 1-pyrroline-5-carboxylate. This is Gamma-glutamyl phosphate reductase from Rhizobium johnstonii (strain DSM 114642 / LMG 32736 / 3841) (Rhizobium leguminosarum bv. viciae).